Reading from the N-terminus, the 350-residue chain is Succinylglutamate desuccinylase (350 aa).

The Zn(2+) site is built by His-71, Glu-74, and His-169. Residue Glu-233 is part of the active site.

The protein belongs to the AspA/AstE family. Succinylglutamate desuccinylase subfamily. Zn(2+) serves as cofactor.

The enzyme catalyses N-succinyl-L-glutamate + H2O = L-glutamate + succinate. Its pathway is amino-acid degradation; L-arginine degradation via AST pathway; L-glutamate and succinate from L-arginine: step 5/5. Transforms N(2)-succinylglutamate into succinate and glutamate. In Pseudoalteromonas atlantica (strain T6c / ATCC BAA-1087), this protein is Succinylglutamate desuccinylase.